The chain runs to 212 residues: Ribonuclease HII (212 aa).

The RNase H type-2 domain occupies Ser28–Phe212. Positions 34, 35, and 127 each coordinate a divalent metal cation.

It belongs to the RNase HII family. Mn(2+) serves as cofactor. It depends on Mg(2+) as a cofactor.

It localises to the cytoplasm. The catalysed reaction is Endonucleolytic cleavage to 5'-phosphomonoester.. Endonuclease that specifically degrades the RNA of RNA-DNA hybrids. The polypeptide is Ribonuclease HII (Chlamydia abortus (strain DSM 27085 / S26/3) (Chlamydophila abortus)).